A 238-amino-acid chain; its full sequence is ATP synthase subunit a (238 aa).

4 consecutive transmembrane segments (helical) span residues 17–37 (LSNI…AIIC), 80–100 (ITLL…QIAI), 112–132 (DPIV…YYGI), and 194–214 (IFVG…SIFI).

It belongs to the ATPase A chain family. F-type ATPases have 2 components, CF(1) - the catalytic core - and CF(0) - the membrane proton channel. CF(1) has five subunits: alpha(3), beta(3), gamma(1), delta(1), epsilon(1). CF(0) has three main subunits: a(1), b(2) and c(9-12). The alpha and beta chains form an alternating ring which encloses part of the gamma chain. CF(1) is attached to CF(0) by a central stalk formed by the gamma and epsilon chains, while a peripheral stalk is formed by the delta and b chains.

It is found in the cell membrane. In terms of biological role, key component of the proton channel; it plays a direct role in the translocation of protons across the membrane. The protein is ATP synthase subunit a of Listeria innocua serovar 6a (strain ATCC BAA-680 / CLIP 11262).